Reading from the N-terminus, the 892-residue chain is Alanine--tRNA ligase (892 aa).

4 residues coordinate Zn(2+): H577, H581, C680, and H684.

Belongs to the class-II aminoacyl-tRNA synthetase family. Requires Zn(2+) as cofactor.

Its subcellular location is the cytoplasm. The catalysed reaction is tRNA(Ala) + L-alanine + ATP = L-alanyl-tRNA(Ala) + AMP + diphosphate. Functionally, catalyzes the attachment of alanine to tRNA(Ala) in a two-step reaction: alanine is first activated by ATP to form Ala-AMP and then transferred to the acceptor end of tRNA(Ala). Also edits incorrectly charged Ser-tRNA(Ala) and Gly-tRNA(Ala) via its editing domain. The sequence is that of Alanine--tRNA ligase from Paenarthrobacter aurescens (strain TC1).